Here is a 173-residue protein sequence, read N- to C-terminus: ATP synthase subunit b (173 aa).

The helical transmembrane segment at 20–40 (IIATLAIFLVLMFLLKKVAWG) threads the bilayer.

It belongs to the ATPase B chain family. F-type ATPases have 2 components, F(1) - the catalytic core - and F(0) - the membrane proton channel. F(1) has five subunits: alpha(3), beta(3), gamma(1), delta(1), epsilon(1). F(0) has three main subunits: a(1), b(2) and c(10-14). The alpha and beta chains form an alternating ring which encloses part of the gamma chain. F(1) is attached to F(0) by a central stalk formed by the gamma and epsilon chains, while a peripheral stalk is formed by the delta and b chains.

Its subcellular location is the cell membrane. In terms of biological role, f(1)F(0) ATP synthase produces ATP from ADP in the presence of a proton or sodium gradient. F-type ATPases consist of two structural domains, F(1) containing the extramembraneous catalytic core and F(0) containing the membrane proton channel, linked together by a central stalk and a peripheral stalk. During catalysis, ATP synthesis in the catalytic domain of F(1) is coupled via a rotary mechanism of the central stalk subunits to proton translocation. Component of the F(0) channel, it forms part of the peripheral stalk, linking F(1) to F(0). The polypeptide is ATP synthase subunit b (Lysinibacillus sphaericus (strain C3-41)).